The sequence spans 303 residues: Glycine--tRNA ligase alpha subunit (303 aa).

This sequence belongs to the class-II aminoacyl-tRNA synthetase family. Tetramer of two alpha and two beta subunits.

It is found in the cytoplasm. The catalysed reaction is tRNA(Gly) + glycine + ATP = glycyl-tRNA(Gly) + AMP + diphosphate. The protein is Glycine--tRNA ligase alpha subunit of Stenotrophomonas maltophilia (strain K279a).